We begin with the raw amino-acid sequence, 415 residues long: Serine--tRNA ligase (415 aa).

Residue 231-233 (TAE) participates in L-serine binding. 262 to 264 (RSE) is an ATP binding site. L-serine is bound at residue Glu285. 349 to 352 (EISS) contributes to the ATP binding site. Ser383 is a binding site for L-serine.

It belongs to the class-II aminoacyl-tRNA synthetase family. Type-1 seryl-tRNA synthetase subfamily. Homodimer. The tRNA molecule binds across the dimer.

The protein resides in the cytoplasm. It catalyses the reaction tRNA(Ser) + L-serine + ATP = L-seryl-tRNA(Ser) + AMP + diphosphate + H(+). It carries out the reaction tRNA(Sec) + L-serine + ATP = L-seryl-tRNA(Sec) + AMP + diphosphate + H(+). It participates in aminoacyl-tRNA biosynthesis; selenocysteinyl-tRNA(Sec) biosynthesis; L-seryl-tRNA(Sec) from L-serine and tRNA(Sec): step 1/1. Its function is as follows. Catalyzes the attachment of serine to tRNA(Ser). Is also able to aminoacylate tRNA(Sec) with serine, to form the misacylated tRNA L-seryl-tRNA(Sec), which will be further converted into selenocysteinyl-tRNA(Sec). The polypeptide is Serine--tRNA ligase (Helicobacter pylori (strain Shi470)).